Reading from the N-terminus, the 260-residue chain is 3-methyl-2-oxobutanoate hydroxymethyltransferase (260 aa).

2 residues coordinate Mg(2+): Asp-44 and Asp-83. 3-methyl-2-oxobutanoate contacts are provided by residues 44–45, Asp-83, and Lys-113; that span reads DS. Residue Glu-115 participates in Mg(2+) binding. Glu-183 (proton acceptor) is an active-site residue.

Belongs to the PanB family. In terms of assembly, homodecamer; pentamer of dimers. Mg(2+) is required as a cofactor.

It localises to the cytoplasm. It carries out the reaction 3-methyl-2-oxobutanoate + (6R)-5,10-methylene-5,6,7,8-tetrahydrofolate + H2O = 2-dehydropantoate + (6S)-5,6,7,8-tetrahydrofolate. Its pathway is cofactor biosynthesis; (R)-pantothenate biosynthesis; (R)-pantoate from 3-methyl-2-oxobutanoate: step 1/2. In terms of biological role, catalyzes the reversible reaction in which hydroxymethyl group from 5,10-methylenetetrahydrofolate is transferred onto alpha-ketoisovalerate to form ketopantoate. This chain is 3-methyl-2-oxobutanoate hydroxymethyltransferase, found in Gloeobacter violaceus (strain ATCC 29082 / PCC 7421).